The following is a 639-amino-acid chain: Mediator of RNA polymerase II transcription subunit 17 (639 aa).

The stretch at 160–187 (RLQSFNAAADKLLKSASRLENEVASETR) forms a coiled coil.

It belongs to the Mediator complex subunit 17 family. In terms of assembly, component of the Mediator complex.

It is found in the nucleus. Component of the Mediator complex, a coactivator involved in the regulated transcription of nearly all RNA polymerase II-dependent genes. Mediator functions as a bridge to convey information from gene-specific regulatory proteins to the basal RNA polymerase II transcription machinery. Mediator is recruited to promoters by direct interactions with regulatory proteins and serves as a scaffold for the assembly of a functional preinitiation complex with RNA polymerase II and the general transcription factors. The sequence is that of Mediator of RNA polymerase II transcription subunit 17 (srb4) from Aspergillus fumigatus (strain ATCC MYA-4609 / CBS 101355 / FGSC A1100 / Af293) (Neosartorya fumigata).